A 75-amino-acid polypeptide reads, in one-letter code: Beta-defensin 30 (75 aa).

Positions 1 to 22 (MGSLQLTLVLFVLLSYVPPVRS) are cleaved as a signal peptide. Disulfide bonds link C35–C62, C42–C56, and C46–C63.

Belongs to the beta-defensin family.

Its subcellular location is the secreted. Its function is as follows. Has antibacterial activity. The chain is Beta-defensin 30 (Defb30) from Mus musculus (Mouse).